The chain runs to 118 residues: Actin depolymerizing factor ADF (118 aa).

An ADF-H domain is found at 4-118; sequence GMGVDENCVA…HEMGDLAPLA (115 aa).

It belongs to the actin-binding proteins ADF family. Interacts with ACT1 (G-actin); the interaction results in inhibition of actin polymerization. Interacts with DPA; the interaction enhances ADF activity in disassembly of filamentous actin and inhibition of actin polymerization.

It localises to the cytoplasm. In terms of biological role, inhibits actin polymerization. Promotes actin depolymerization. Strongly sequesters actin monomers (G-actin). Weakly severs actin filaments (F-actin). The polypeptide is Actin depolymerizing factor ADF (Toxoplasma gondii).